The sequence spans 82 residues: DNA-directed RNA polymerase subunit Rpo5 (82 aa).

It belongs to the archaeal Rpo5/eukaryotic RPB5 RNA polymerase subunit family. In terms of assembly, part of the RNA polymerase complex.

It is found in the cytoplasm. The enzyme catalyses RNA(n) + a ribonucleoside 5'-triphosphate = RNA(n+1) + diphosphate. Functionally, DNA-dependent RNA polymerase (RNAP) catalyzes the transcription of DNA into RNA using the four ribonucleoside triphosphates as substrates. This is DNA-directed RNA polymerase subunit Rpo5 from Pyrococcus abyssi (strain GE5 / Orsay).